The sequence spans 799 residues: MSYKVNSSYPDSIPPTEQPYMASQYKQDLQSNIAMATNSEQQRQQQQQQQQQQQQWINQPTAENSDLKEKMNCKNTLNEYIFDFLTKSSLKNTAAAFAQDAHLDRDKGQNPIDGPKSKENNGNQNTFSKVVDTPQGFLYEWWQIFWDIFNTSSSRGGSEFAQQYYQLVLQEQRQEQIYRSLAVHAARLQHDAERRGEYSNEDIDPMHLAAMMLGNPMAPAVQMRNVNMNPIPIPMVGNPIVNNFSIPPYNNANPTTGATAVAPTAPPSGDFTNVGPTQNRSQNVTGWPVYNYPMQPTTENPVGNPCNNNTTNNTTNNKSPVNQPKSLKTMHSTDKPNNVPTSKSTRSRSATSKAKGKVKAGLVAKRRRKNNTATVSAGSTNAGSPNITTPGSATSEPAMVGSRVNKTPRSDIATNFRNQAIIFGEEDIYSNSKSSPSLDGASPSALASKQPTKVRKNTKKASTSAFPVESTNKLGGNSVVTGKKRSPPNTRMSRRKSTPSVILNADATKDENNMLRTFSNTIAPNIHSAPPTKTANSLPFPGINLGSFNKPAVSSPLSSVTESCFDPESGKIAGKNGPKRAVNSKVSASSPLSIATPRSGDAQKQRSSKVPGNVVIKPPHGFSTTNLNITLKNSKIITSQNNTVSQELPNGGNILEAQVGNDSRSSKGNRNTLSTPEEKKPSSNNQGYDFDALKNSSSLLFPNQAYASNNRTPNENSNVADETSASTNSGDNDNTLIQPSSNVGTTLGPQQTSTNENQNVHSQNLKFGNIGMVEDQGPDYDLNLLDTNENDFNFINWEG.

Disordered regions lie at residues 37 to 68 (TNSE…SDLK), 101 to 127 (AHLD…QNTF), 255 to 406 (TTGA…RVNK), 431 to 501 (NSKS…TPSV), 568 to 622 (ESGK…PHGF), 644 to 691 (VSQE…YDFD), and 705 to 758 (AYAS…NENQ). Residues 41–55 (QQRQQQQQQQQQQQQ) show a composition bias toward low complexity. The LisH domain occupies 73–105 (CKNTLNEYIFDFLTKSSLKNTAAAFAQDAHLDR). The segment covering 270 to 285 (DFTNVGPTQNRSQNVT) has biased composition (polar residues). Residues 307–317 (NNNTTNNTTNN) are compositionally biased toward low complexity. A compositionally biased stretch (polar residues) spans 318–340 (KSPVNQPKSLKTMHSTDKPNNVP). The span at 341–353 (TSKSTRSRSATSK) shows a compositional bias: low complexity. The span at 354-370 (AKGKVKAGLVAKRRRKN) shows a compositional bias: basic residues. Composition is skewed to polar residues over residues 371 to 395 (NTAT…SATS) and 460 to 480 (KAST…NSVV). The segment covering 482 to 497 (GKKRSPPNTRMSRRKS) has biased composition (basic residues). Composition is skewed to polar residues over residues 584-593 (SKVSASSPLS) and 660-675 (GNDS…TLST).

This sequence belongs to the FLO8 family.

It localises to the nucleus. Required for diploid filamentous growth, haploid invasive growth and flocculation. Putative transcriptional activator of FLO1. In Saccharomyces cerevisiae (strain Lalvin EC1118 / Prise de mousse) (Baker's yeast), this protein is Transcriptional activator FLO8 (FLO8).